The chain runs to 268 residues: Cell division coordinator CpoB (268 aa).

Positions 1 to 21 (MRMCRRVVTVLALSLPLAAWA) are cleaved as a signal peptide. The stretch at 58–94 (QLFMQLQQMQDQLSRQQGIIEELQNDVSRMKQENLER) forms a coiled coil. The disordered stretch occupies residues 104–146 (SGAAPAATPDNSSGGGASNAAPDAAAGAAAQQPAGSSQPGDPA). Residues 121 to 143 (SNAAPDAAAGAAAQQPAGSSQPG) are compositionally biased toward low complexity. TPR repeat units lie at residues 149-181 (KLYY…YPNS), 185-218 (GNAQ…YPKH), and 222-255 (PDSL…YPGT).

The protein belongs to the CpoB family.

Its subcellular location is the periplasm. Its function is as follows. Mediates coordination of peptidoglycan synthesis and outer membrane constriction during cell division. The chain is Cell division coordinator CpoB from Pseudomonas putida (strain ATCC 47054 / DSM 6125 / CFBP 8728 / NCIMB 11950 / KT2440).